The chain runs to 474 residues: L-arabinose isomerase 2 (474 aa).

Residues glutamate 306, glutamate 331, histidine 348, and histidine 447 each coordinate Mn(2+).

This sequence belongs to the arabinose isomerase family. Mn(2+) serves as cofactor.

The catalysed reaction is beta-L-arabinopyranose = L-ribulose. It participates in carbohydrate degradation; L-arabinose degradation via L-ribulose; D-xylulose 5-phosphate from L-arabinose (bacterial route): step 1/3. Catalyzes the conversion of L-arabinose to L-ribulose. The sequence is that of L-arabinose isomerase 2 from Bacillus licheniformis (strain ATCC 14580 / DSM 13 / JCM 2505 / CCUG 7422 / NBRC 12200 / NCIMB 9375 / NCTC 10341 / NRRL NRS-1264 / Gibson 46).